The sequence spans 388 residues: MSSIPNINWNDPNNGKSNTSRQSQPQPQLPSNVSPPNSRAVPTSGSIGGPQYGSSQFSNEYSRNPNTIGGPPFPLQSNQRGYMPNTGYPVQQTAQQRSGDKLQQVHSQQQQQQQQQQQPLYQQYPPQSVGYLAGDVYNPQHQEYVQMNQLPNQHYNLQQRQQAQGQQLKSQLNEQNAMMSASTQQYPVQDFTNPYPNAQNPAEQQQQQQPLRTQSQQWDGYQSQPLYSAAGNTIPSSIQQQIPPQNLSPSEQQQVKQQQPSPPEQGTKKKPGRKPKLRKLSESSSETPQVPKTASSSSSSPTAVNSGKPITKRSRMGCLTCRQRKKRCCETRPRCTECTRLRLNCTWPKPGTEHKNKPKDQKDDENTIEHAEFGRIKVLRGIVEYRSK.

Over residues 1–19 (MSSIPNINWNDPNNGKSNT) the composition is skewed to polar residues. Disordered stretches follow at residues 1 to 120 (MSSI…QQPL), 157 to 219 (LQQR…QQWD), and 236 to 311 (SSIQ…KPIT). A compositionally biased stretch (low complexity) spans 20 to 38 (SRQSQPQPQLPSNVSPPNS). Polar residues-rich tracts occupy residues 52–67 (YGSS…NPNT) and 88–97 (YPVQQTAQQR). Composition is skewed to low complexity over residues 102-120 (LQQV…QQPL) and 157-172 (LQQR…KSQL). Residues 173-203 (NEQNAMMSASTQQYPVQDFTNPYPNAQNPAE) show a composition bias toward polar residues. 2 stretches are compositionally biased toward low complexity: residues 204-217 (QQQQ…QSQQ) and 236-259 (SSIQ…KQQQ). Residues 268-278 (KKKPGRKPKLR) show a composition bias toward basic residues. Polar residues predominate over residues 282–294 (ESSSETPQVPKTA). The segment at residues 318–345 (CLTCRQRKKRCCETRPRCTECTRLRLNC) is a DNA-binding region (zn(2)-C6 fungal-type). Positions 348–367 (PKPGTEHKNKPKDQKDDENT) are disordered. A compositionally biased stretch (basic and acidic residues) spans 351-367 (GTEHKNKPKDQKDDENT).

It localises to the nucleus. Functionally, perhaps a regulatory role. May be involved in transcriptional activation. This is Zinc finger protein 1 (CZF1) from Candida albicans (strain WO-1) (Yeast).